The following is a 230-amino-acid chain: Large ribosomal subunit protein uL1 (230 aa).

It belongs to the universal ribosomal protein uL1 family. In terms of assembly, part of the 50S ribosomal subunit.

Binds directly to 23S rRNA. The L1 stalk is quite mobile in the ribosome, and is involved in E site tRNA release. Its function is as follows. Protein L1 is also a translational repressor protein, it controls the translation of the L11 operon by binding to its mRNA. The chain is Large ribosomal subunit protein uL1 from Onion yellows phytoplasma (strain OY-M).